The primary structure comprises 158 residues: MSTIPITKRGAEMLKDELQRLKTKERPAVVNAIAEARAQGDLSENADYDAAKERQGFIEGRILEIESKLAAAQVIDPAGLDADGRIVFGATIDLEDLDSGKPVTYQIVGDDEADLDSGKISISSPIARALIGKYEGDVATVVAPGGEREYEVRAVKYL.

The protein belongs to the GreA/GreB family.

Functionally, necessary for efficient RNA polymerase transcription elongation past template-encoded arresting sites. The arresting sites in DNA have the property of trapping a certain fraction of elongating RNA polymerases that pass through, resulting in locked ternary complexes. Cleavage of the nascent transcript by cleavage factors such as GreA or GreB allows the resumption of elongation from the new 3'terminus. GreA releases sequences of 2 to 3 nucleotides. The polypeptide is Transcription elongation factor GreA (Ralstonia nicotianae (strain ATCC BAA-1114 / GMI1000) (Ralstonia solanacearum)).